The sequence spans 101 residues: Urease subunit beta (101 aa).

Belongs to the urease beta subunit family. As to quaternary structure, heterotrimer of UreA (gamma), UreB (beta) and UreC (alpha) subunits. Three heterotrimers associate to form the active enzyme.

The protein localises to the cytoplasm. The catalysed reaction is urea + 2 H2O + H(+) = hydrogencarbonate + 2 NH4(+). The protein operates within nitrogen metabolism; urea degradation; CO(2) and NH(3) from urea (urease route): step 1/1. This chain is Urease subunit beta, found in Thermosynechococcus vestitus (strain NIES-2133 / IAM M-273 / BP-1).